Here is a 288-residue protein sequence, read N- to C-terminus: Acetyl-coenzyme A carboxylase carboxyl transferase subunit beta (288 aa).

The 255-residue stretch at 34 to 288 folds into the CoA carboxyltransferase N-terminal domain; it reads LFAKCPACKH…HLVAFHGGVS (255 aa). 4 residues coordinate Zn(2+): Cys38, Cys41, Cys56, and Cys59. The C4-type zinc-finger motif lies at 38–59; the sequence is CPACKHMIYQKDLGPAKICPTC.

It belongs to the AccD/PCCB family. In terms of assembly, acetyl-CoA carboxylase is a heterohexamer composed of biotin carboxyl carrier protein (AccB), biotin carboxylase (AccC) and two subunits each of ACCase subunit alpha (AccA) and ACCase subunit beta (AccD). The cofactor is Zn(2+).

It localises to the cytoplasm. It catalyses the reaction N(6)-carboxybiotinyl-L-lysyl-[protein] + acetyl-CoA = N(6)-biotinyl-L-lysyl-[protein] + malonyl-CoA. Its pathway is lipid metabolism; malonyl-CoA biosynthesis; malonyl-CoA from acetyl-CoA: step 1/1. In terms of biological role, component of the acetyl coenzyme A carboxylase (ACC) complex. Biotin carboxylase (BC) catalyzes the carboxylation of biotin on its carrier protein (BCCP) and then the CO(2) group is transferred by the transcarboxylase to acetyl-CoA to form malonyl-CoA. This chain is Acetyl-coenzyme A carboxylase carboxyl transferase subunit beta, found in Streptococcus equi subsp. zooepidemicus (strain H70).